We begin with the raw amino-acid sequence, 235 residues long: Aspartate/glutamate leucyltransferase (235 aa).

Belongs to the R-transferase family. Bpt subfamily.

The protein localises to the cytoplasm. It catalyses the reaction N-terminal L-glutamyl-[protein] + L-leucyl-tRNA(Leu) = N-terminal L-leucyl-L-glutamyl-[protein] + tRNA(Leu) + H(+). It carries out the reaction N-terminal L-aspartyl-[protein] + L-leucyl-tRNA(Leu) = N-terminal L-leucyl-L-aspartyl-[protein] + tRNA(Leu) + H(+). Functionally, functions in the N-end rule pathway of protein degradation where it conjugates Leu from its aminoacyl-tRNA to the N-termini of proteins containing an N-terminal aspartate or glutamate. In Pseudomonas aeruginosa (strain LESB58), this protein is Aspartate/glutamate leucyltransferase.